The following is a 97-amino-acid chain: Large ribosomal subunit protein uL23 (97 aa).

This sequence belongs to the universal ribosomal protein uL23 family. In terms of assembly, part of the 50S ribosomal subunit. Contacts protein L29, and trigger factor when it is bound to the ribosome.

Its function is as follows. One of the early assembly proteins it binds 23S rRNA. One of the proteins that surrounds the polypeptide exit tunnel on the outside of the ribosome. Forms the main docking site for trigger factor binding to the ribosome. The chain is Large ribosomal subunit protein uL23 from Brucella canis (strain ATCC 23365 / NCTC 10854 / RM-666).